The sequence spans 161 residues: Dehydrin DHN3 (161 aa).

The segment covering 1–12 (MEHGHATNRVDE) has biased composition (basic and acidic residues). Positions 1-161 (MEHGHATNRV…KIKEKLPGQH (161 aa)) are disordered. Residues 20–38 (HGVGTGMGAHGGVGTGAAA) show a composition bias toward gly residues. 2 stretches are compositionally biased toward low complexity: residues 93–107 (DQQQ…HGHT) and 115–130 (HGAT…QGHT). 2 consecutive repeat copies span residues 101–123 (YGQH…TGGT) and 124–144 (YGQQ…DGTG). A 2 X approximate tandem repeats region spans residues 101-144 (YGQHGHTGMTGTGEHGATATGGTYGQQGHTGMTGTGAHGTDGTG). Positions 131–142 (GMTGTGAHGTDG) are enriched in gly residues. Residues 143–161 (TGEKKGIMDKIKEKLPGQH) show a composition bias toward basic and acidic residues.

It belongs to the plant dehydrin family.

This Hordeum vulgare (Barley) protein is Dehydrin DHN3 (DHN3).